The following is a 482-amino-acid chain: Bifunctional protein GlmU (482 aa).

Positions 1-238 (MSATSPAAVV…HREILGINNR (238 aa)) are pyrophosphorylase. UDP-N-acetyl-alpha-D-glucosamine contacts are provided by residues 12-15 (LAAG), Lys26, Gln79, and 84-85 (GT). Asp110 lines the Mg(2+) pocket. UDP-N-acetyl-alpha-D-glucosamine is bound by residues Gly147, Glu163, Asn178, and Asn236. A Mg(2+)-binding site is contributed by Asn236. The linker stretch occupies residues 239-259 (LQLAEARRLLNERLLERAMLA). The tract at residues 260–482 (GVTVVDPAST…ASSQETDGQS (223 aa)) is N-acetyltransferase. The UDP-N-acetyl-alpha-D-glucosamine site is built by Arg341 and Lys359. The active-site Proton acceptor is the His371. Tyr374 and Asn385 together coordinate UDP-N-acetyl-alpha-D-glucosamine. Acetyl-CoA-binding positions include Ala388, 394–395 (NY), Ser413, Ala431, and Arg448. Positions 458–482 (VARKRPGSAAAQAAQASSQETDGQS) are disordered. Residues 465–476 (SAAAQAAQASSQ) are compositionally biased toward low complexity.

In the N-terminal section; belongs to the N-acetylglucosamine-1-phosphate uridyltransferase family. This sequence in the C-terminal section; belongs to the transferase hexapeptide repeat family. Homotrimer. Mg(2+) serves as cofactor.

The protein resides in the cytoplasm. The enzyme catalyses alpha-D-glucosamine 1-phosphate + acetyl-CoA = N-acetyl-alpha-D-glucosamine 1-phosphate + CoA + H(+). The catalysed reaction is N-acetyl-alpha-D-glucosamine 1-phosphate + UTP + H(+) = UDP-N-acetyl-alpha-D-glucosamine + diphosphate. It participates in nucleotide-sugar biosynthesis; UDP-N-acetyl-alpha-D-glucosamine biosynthesis; N-acetyl-alpha-D-glucosamine 1-phosphate from alpha-D-glucosamine 6-phosphate (route II): step 2/2. Its pathway is nucleotide-sugar biosynthesis; UDP-N-acetyl-alpha-D-glucosamine biosynthesis; UDP-N-acetyl-alpha-D-glucosamine from N-acetyl-alpha-D-glucosamine 1-phosphate: step 1/1. It functions in the pathway bacterial outer membrane biogenesis; LPS lipid A biosynthesis. Functionally, catalyzes the last two sequential reactions in the de novo biosynthetic pathway for UDP-N-acetylglucosamine (UDP-GlcNAc). The C-terminal domain catalyzes the transfer of acetyl group from acetyl coenzyme A to glucosamine-1-phosphate (GlcN-1-P) to produce N-acetylglucosamine-1-phosphate (GlcNAc-1-P), which is converted into UDP-GlcNAc by the transfer of uridine 5-monophosphate (from uridine 5-triphosphate), a reaction catalyzed by the N-terminal domain. This chain is Bifunctional protein GlmU, found in Streptomyces griseus subsp. griseus (strain JCM 4626 / CBS 651.72 / NBRC 13350 / KCC S-0626 / ISP 5235).